Here is a 256-residue protein sequence, read N- to C-terminus: Cytochrome c-type biogenesis protein CcmE homolog, mitochondrial (256 aa).

The transit peptide at 1-57 directs the protein to the mitochondrion; it reads MAARLLFRRSSQILRSIQRNPQISSSFESPPCPIFHSLTTASPDPSRLSSLTFLRSL. Residues 84-106 traverse the membrane as a helical segment; it reads LWTYALTFSCIAGFVVIVLNQFQ. 2 residues coordinate heme: His222 and Tyr226.

Belongs to the CcmE/CycJ family.

Its subcellular location is the mitochondrion inner membrane. It is found in the mitochondrion intermembrane space. Functionally, heme-binding chaperone that may be involved in cytochrome c maturation in mitochondria. This chain is Cytochrome c-type biogenesis protein CcmE homolog, mitochondrial, found in Arabidopsis thaliana (Mouse-ear cress).